The following is a 1238-amino-acid chain: Multifunctional 2-oxoglutarate metabolism enzyme (1238 aa).

A 2-oxoglutarate dehydrogenase E1, N-terminal part region spans residues Met1–Asn41. A linker region spans residues Pro42–Ala97. Positions Ser44–Ile108 are disordered. Residues Gln59–Pro107 show a composition bias toward low complexity. A succinyltransferase E2 region spans residues Ala98–Ser346. His325 acts as the Proton acceptor; for succinyltransferase activity in catalysis. The tract at residues Asp347 to Gly1238 is 2-oxoglutarate dehydrogenase E1, C-terminal part. Arg551 is a thiamine diphosphate binding site. 2-oxoglutarate is bound by residues His590 and Ser615. Thiamine diphosphate-binding residues include Ser615, Leu617, Asp657, Ala658, Ala659, and Asn690. Residue Asp657 participates in Mg(2+) binding. Residues Asn690 and Ile692 each coordinate Mg(2+). Positions Asp795 to His825 form a coiled coil. Position 1032 (His1032) interacts with 2-oxoglutarate. Acetyl-CoA is bound by residues Thr1050, Arg1066, Lys1101, Ser1104, Gln1154, Arg1161, and Arg1162.

Belongs to the 2-oxoacid dehydrogenase family. Kgd subfamily. As to quaternary structure, homodimer. The 2-oxoglutarate dehydrogenase (ODH) complex contains multiple copies of three enzymatic components: 2-oxoglutarate dehydrogenase (E1), dihydrolipoamide succinyltransferase (E2) and lipoamide dehydrogenase (E3). The cofactor is Mg(2+). Thiamine diphosphate is required as a cofactor.

The catalysed reaction is glyoxylate + 2-oxoglutarate + H(+) = 2-hydroxy-3-oxoadipate + CO2. The enzyme catalyses 2-oxoglutarate + H(+) = succinate semialdehyde + CO2. It catalyses the reaction N(6)-[(R)-lipoyl]-L-lysyl-[protein] + 2-oxoglutarate + H(+) = N(6)-[(R)-S(8)-succinyldihydrolipoyl]-L-lysyl-[protein] + CO2. It carries out the reaction N(6)-[(R)-dihydrolipoyl]-L-lysyl-[protein] + succinyl-CoA = N(6)-[(R)-S(8)-succinyldihydrolipoyl]-L-lysyl-[protein] + CoA. The protein operates within carbohydrate metabolism; tricarboxylic acid cycle; succinate from 2-oxoglutarate (transferase route): step 1/2. It functions in the pathway carbohydrate metabolism; tricarboxylic acid cycle; succinyl-CoA from 2-oxoglutarate (dehydrogenase route): step 1/1. With respect to regulation, alpha-ketoglutarate dehydrogenase and decarboxylase activities are inhibited by unphosphorylated GarA, and allosterically activated by acetyl-CoA, the main substrate of the TCA cycle. Its function is as follows. Shows three enzymatic activities that share a first common step, the attack of thiamine-PP on 2-oxoglutarate (alpha-ketoglutarate, KG), leading to the formation of an enamine-thiamine-PP intermediate upon decarboxylation. Thus, displays KGD activity, catalyzing the decarboxylation from five-carbon 2-oxoglutarate to four-carbon succinate semialdehyde (SSA). Also catalyzes C-C bond formation between the activated aldehyde formed after decarboxylation of alpha-ketoglutarate and the carbonyl of glyoxylate (GLX), to yield 2-hydroxy-3-oxoadipate (HOA), which spontaneously decarboxylates to form 5-hydroxylevulinate (HLA). And is also a component of the 2-oxoglutarate dehydrogenase (ODH) complex, that catalyzes the overall conversion of 2-oxoglutarate to succinyl-CoA and CO(2). The KG decarboxylase and KG dehydrogenase reactions provide two alternative, tightly regulated, pathways connecting the oxidative and reductive branches of the TCA cycle. In Mycobacterium leprae (strain TN), this protein is Multifunctional 2-oxoglutarate metabolism enzyme (kgd).